The primary structure comprises 139 residues: Ribonuclease VapC3 (139 aa).

Positions 14–121 (EAIVLDTGAF…VATDDYTLQR (108 aa)) constitute a PINc domain. Residue aspartate 19 participates in Mg(2+) binding.

This sequence belongs to the PINc/VapC protein family. Requires Mg(2+) as cofactor.

Functionally, toxic component of a type II toxin-antitoxin (TA) system. An RNase. In Aeropyrum pernix (strain ATCC 700893 / DSM 11879 / JCM 9820 / NBRC 100138 / K1), this protein is Ribonuclease VapC3.